A 490-amino-acid polypeptide reads, in one-letter code: GTPase Der (490 aa).

EngA-type G domains follow at residues 3–166 and 203–376; these read PVVA…MEDL and IKLA…DSST. GTP contacts are provided by residues 9-16, 56-60, 118-121, 209-216, 256-260, and 321-324; these read GRPNVGKS, DTGGI, NKTD, DTAGV, and NKWD. Residues 377–461 enclose the KH-like domain; it reads RRVGTSMLTR…PIRIQFKEGE (85 aa).

Belongs to the TRAFAC class TrmE-Era-EngA-EngB-Septin-like GTPase superfamily. EngA (Der) GTPase family. Associates with the 50S ribosomal subunit.

In terms of biological role, GTPase that plays an essential role in the late steps of ribosome biogenesis. This is GTPase Der from Escherichia coli O17:K52:H18 (strain UMN026 / ExPEC).